Here is an 89-residue protein sequence, read N- to C-terminus: Small ribosomal subunit protein uS15 (89 aa).

Belongs to the universal ribosomal protein uS15 family. Part of the 30S ribosomal subunit. Forms a bridge to the 50S subunit in the 70S ribosome, contacting the 23S rRNA.

One of the primary rRNA binding proteins, it binds directly to 16S rRNA where it helps nucleate assembly of the platform of the 30S subunit by binding and bridging several RNA helices of the 16S rRNA. Functionally, forms an intersubunit bridge (bridge B4) with the 23S rRNA of the 50S subunit in the ribosome. The sequence is that of Small ribosomal subunit protein uS15 from Chelativorans sp. (strain BNC1).